A 585-amino-acid chain; its full sequence is Glucose oxidase-like protein fsoC (585 aa).

Ala104 is an FAD binding site. The active-site Proton donor is His521. His564 serves as the catalytic Proton acceptor.

It belongs to the GMC oxidoreductase family. Monomer. FAD serves as cofactor.

Its function is as follows. Glucose oxidase-like protein; part of the gene cluster that mediates the biosynthesis of the enfumafungin-type antibiotic fuscoatroside. Four enzymes are sufficient to produce fuscoatroside: the terpene cyclase-glycosyl transferase fusion protein fsoAthe cytochrome P450 monoxygenases fsoD and fsoE, and the acetyltransferase fsoF; the cytochrome P450 monooxygenase fsoB and the glucose oxidase-like protein fsoC do not seem to play a role in biosynthesis of fuscoatroside. Functionally, glucose oxidase; part of the gene cluster that mediates the biosynthesis of the enfumafungin-type antibiotic, fuscoatroside. The sequence is that of Glucose oxidase-like protein fsoC from Humicola fuscoatra.